The chain runs to 768 residues: Solute carrier family 45 member 4 (768 aa).

The interval 1-32 is disordered; it reads MKMAPQNADPESMQVQELSVPLPDPQKAGGAE. 6 helical membrane passes run 63 to 83, 86 to 106, 123 to 143, 155 to 175, 196 to 216, and 233 to 253; these read EFCY…IGLP, YYSL…PLIG, ILAL…GSAI, PIGI…ADAT, LNIH…LGGL, and VLFF…LFSI. Disordered regions lie at residues 259–284 and 379–419; these read SPQQ…PAFP and NEAK…RHAF. Phosphoserine occurs at positions 424 and 454. The segment at 460 to 489 is disordered; that stretch reads DMQKRQRQHRHRNQSGATTSSGDTESEEGE. Over residues 473–482 the composition is skewed to low complexity; the sequence is QSGATTSSGD. The residue at position 485 (serine 485) is a Phosphoserine. A run of 6 helical transmembrane segments spans residues 518 to 538, 560 to 580, 592 to 612, 614 to 634, 666 to 686, and 695 to 715; these read TWFS…QVIF, MGCW…ALLQ, VIYV…AMFP, VYVA…ISYC, ILSC…GGVV, and IPMV…FLVI. Residues 726 to 768 form a disordered region; sequence EQKGLSSPLAGEGRAGGNSEKPTVLKLTRKEGLQGPVETESVV. Position 732 is a phosphoserine (serine 732).

Belongs to the glycoside-pentoside-hexuronide (GPH) cation symporter transporter (TC 2.A.2) family.

It localises to the membrane. The catalysed reaction is sucrose(out) + H(+)(out) = sucrose(in) + H(+)(in). Functionally, proton-associated sucrose transporter. May be able to transport also glucose and fructose. The polypeptide is Solute carrier family 45 member 4 (Homo sapiens (Human)).